A 493-amino-acid polypeptide reads, in one-letter code: Galactose-1-phosphate uridylyltransferase 2 (493 aa).

It belongs to the galactose-1-phosphate uridylyltransferase type 2 family.

The protein resides in the cytoplasm. The enzyme catalyses alpha-D-galactose 1-phosphate + UDP-alpha-D-glucose = alpha-D-glucose 1-phosphate + UDP-alpha-D-galactose. It participates in carbohydrate metabolism; galactose metabolism. This Streptococcus pneumoniae serotype 4 (strain ATCC BAA-334 / TIGR4) protein is Galactose-1-phosphate uridylyltransferase 2 (galT2).